A 289-amino-acid chain; its full sequence is 4-hydroxy-tetrahydrodipicolinate synthase (289 aa).

Thr43 is a binding site for pyruvate. Tyr131 acts as the Proton donor/acceptor in catalysis. The active-site Schiff-base intermediate with substrate is the Lys160. Val200 is a pyruvate binding site.

This sequence belongs to the DapA family. As to quaternary structure, homotetramer; dimer of dimers.

It is found in the cytoplasm. The catalysed reaction is L-aspartate 4-semialdehyde + pyruvate = (2S,4S)-4-hydroxy-2,3,4,5-tetrahydrodipicolinate + H2O + H(+). It functions in the pathway amino-acid biosynthesis; L-lysine biosynthesis via DAP pathway; (S)-tetrahydrodipicolinate from L-aspartate: step 3/4. Its function is as follows. Catalyzes the condensation of (S)-aspartate-beta-semialdehyde [(S)-ASA] and pyruvate to 4-hydroxy-tetrahydrodipicolinate (HTPA). The sequence is that of 4-hydroxy-tetrahydrodipicolinate synthase from Methanococcus maripaludis (strain C7 / ATCC BAA-1331).